The chain runs to 343 residues: Anthranilate phosphoribosyltransferase (343 aa).

Residues glycine 84, 87 to 88 (GD), threonine 92, 94 to 97 (NIST), 112 to 120 (KHGNRSVSS), and serine 124 each bind 5-phospho-alpha-D-ribose 1-diphosphate. Anthranilate is bound at residue glycine 84. Serine 96 serves as a coordination point for Mg(2+). Asparagine 115 contacts anthranilate. Arginine 170 is an anthranilate binding site. Mg(2+)-binding residues include aspartate 229 and glutamate 230.

It belongs to the anthranilate phosphoribosyltransferase family. As to quaternary structure, homodimer. The cofactor is Mg(2+).

The catalysed reaction is N-(5-phospho-beta-D-ribosyl)anthranilate + diphosphate = 5-phospho-alpha-D-ribose 1-diphosphate + anthranilate. It participates in amino-acid biosynthesis; L-tryptophan biosynthesis; L-tryptophan from chorismate: step 2/5. In terms of biological role, catalyzes the transfer of the phosphoribosyl group of 5-phosphorylribose-1-pyrophosphate (PRPP) to anthranilate to yield N-(5'-phosphoribosyl)-anthranilate (PRA). This chain is Anthranilate phosphoribosyltransferase, found in Stenotrophomonas maltophilia (strain K279a).